Consider the following 616-residue polypeptide: MKKQFDTEVNDLLYLIIHSLYSHKEIFLRELISNASDAIDKLKFLSLTNEKFKNIALEPKIEITFDDKSILIKDNGIGMNEQELTNHLGVIAKSGTKEFINNLKQDEKKSANLIGQFGVGFYSAFIVSEKVEVTSKKALESDAYIWSSDGKTGYEIEKAKKEDPGTEIKLYLNKEGLEYANKWKIQEIVKKYSNHINYPIYIKYNEPIMKDGKQEGIEEKEEKLNETTALWTKNKSEIKTEEYNEFYKNTTFDYENPLMYIHTKAEGNLEYTNLFYIPSKAPYDLYYPNTKPGVKLFINRIFITDSEGSLLPNYLRFIKGIIDCQDLPLNVSREILQQNKILSKIKSSSVKKILSELEKLSKKNPEKFSEFSKEFGRCIKEGVYSDFENREKLISLIRFKSSSVDGFVSFKEYKERMNEGQKSIYYITGGKENILKENPIVTAYKEKGFEILIMDDELDEAILNLIPEYEGLKLKAINKNETSNELKDENFKKIEEEFKDTLTRVKEILKDQIKEVNLSATLIKEPSAIIVDSNDPTYQMQKIMLSMGQEVKEIKPILELNPNNKIVQNLKNLEPEKLEKISILLFEEALLTSGMPSKNPRKFINIINEFLEKDLL.

The a; substrate-binding stretch occupies residues 1–333; the sequence is MKKQFDTEVN…CQDLPLNVSR (333 aa). Residues 334–542 form a b region; sequence EILQQNKILS…SNDPTYQMQK (209 aa). The c stretch occupies residues 543-616; the sequence is IMLSMGQEVK…INEFLEKDLL (74 aa).

It belongs to the heat shock protein 90 family. In terms of assembly, homodimer.

The protein localises to the cytoplasm. Molecular chaperone. Has ATPase activity. This is Chaperone protein HtpG from Borreliella afzelii (strain PKo) (Borrelia afzelii).